The sequence spans 183 residues: uncharacterized protein (183 aa).

Residues 1–29 (MQCWQQPFLRFLQQPFFLATASLAGSSSS) form the signal peptide. The tract at residues 149 to 183 (PGSTCDGSLKGRAYPSCVPKRDPEHSREESHPLSG) is disordered. The span at 167–183 (PKRDPEHSREESHPLSG) shows a compositional bias: basic and acidic residues.

Its subcellular location is the secreted. This is an uncharacterized protein from Homo sapiens (Human).